The sequence spans 119 residues: Ribonuclease P protein component (119 aa).

Belongs to the RnpA family. Consists of a catalytic RNA component (M1 or rnpB) and a protein subunit.

It carries out the reaction Endonucleolytic cleavage of RNA, removing 5'-extranucleotides from tRNA precursor.. RNaseP catalyzes the removal of the 5'-leader sequence from pre-tRNA to produce the mature 5'-terminus. It can also cleave other RNA substrates such as 4.5S RNA. The protein component plays an auxiliary but essential role in vivo by binding to the 5'-leader sequence and broadening the substrate specificity of the ribozyme. This chain is Ribonuclease P protein component, found in Streptococcus pyogenes serotype M5 (strain Manfredo).